The primary structure comprises 701 residues: MNSLFASTARGLEELLKTELEGLGATDCQVVQGGVHFQGDTRLLYQSLMWSRLASRIMLPLGECRVYSDLDLYLGVQAIPWTEMFNPGATFAVHFSGLNDEIRNSQYGALKVKDAIVDSFTRKNLPRPNVDRESPDLRINVWLNKETAHISLDLSGEGLHLRGYRDGTGMAPIKENLAAAIVMRSGWVPGTPLLDPMCGSGTLLIEAAMLATDRAPGLHRGHWGFGGWAQHDDAIWKEVKAEAQTRARQGLAAYESRFYGSDVDARVIERARRNARRAGIGELIDFDVKDVAQLNNPLPKGPYGTVISNPPYGERLESEPALIALHSLLGRIMKSQFGGWNLSVFSASPELLSCLQLRADKQFKAKNGPLDCVQKNYHLAESEGGKPAMLAEDFANRLRKNLKKFEKWARQEGIECYRLYDADLPEYNVAIDRYADWVVVQEYAPPKTVDAHKARQRLFDIIAATIAVLDMAPNKLVLKTRERQKGKNQYQKMAEKGDFIEVQEYNARLWVNLTDYLDTGLFLDHRIARRMLGQMSKGKDFLNLFSYTGSASVHAGLGGARSTTTVDMSRTYLEWAERNLRLNGLTGRAHRLMQADVLGWLRESTEQFDLIFIDPPTFSNSKRMEDAFDVQRDHIRLMTDLKRLLRKGGTIMFSNNKRGFRMDHDGLAALGLKAQEISQKTLSQDFARNRQIHNCWLITAA.

Residues 43–154 (LLYQSLMWSR…KETAHISLDL (112 aa)) form the THUMP domain.

Belongs to the methyltransferase superfamily. RlmKL family.

The protein localises to the cytoplasm. The catalysed reaction is guanosine(2445) in 23S rRNA + S-adenosyl-L-methionine = N(2)-methylguanosine(2445) in 23S rRNA + S-adenosyl-L-homocysteine + H(+). It carries out the reaction guanosine(2069) in 23S rRNA + S-adenosyl-L-methionine = N(2)-methylguanosine(2069) in 23S rRNA + S-adenosyl-L-homocysteine + H(+). Specifically methylates the guanine in position 2445 (m2G2445) and the guanine in position 2069 (m7G2069) of 23S rRNA. The chain is Ribosomal RNA large subunit methyltransferase K/L from Klebsiella pneumoniae subsp. pneumoniae (strain ATCC 700721 / MGH 78578).